The chain runs to 71 residues: uncharacterized protein (71 aa).

A helical transmembrane segment spans residues Ile-37–Ile-57.

The protein localises to the membrane. This is an uncharacterized protein from Dictyostelium discoideum (Social amoeba).